Consider the following 737-residue polypeptide: DNA polymerase iota (737 aa).

Residues 17–231 form the UmuC domain; it reads IIHLDMDYFY…GDLKRVTGIG (215 aa). Asp21 is a binding site for Mg(2+). Residues Tyr26 and Arg58 each contribute to the a 2'-deoxyribonucleoside 5'-triphosphate site. Asp113 serves as a coordination point for Mg(2+). Glu114 is an active-site residue. DNA-binding regions lie at residues 212-277 and 288-413; these read TYAE…FGRD and KTIG…SKFQ. 4 disordered regions span residues 443–464, 482–515, 557–581, and 607–643; these read TSLT…RSSP, SPVP…SPKK, DSEK…RFRT, and LSSN…PSPT. Polar residues predominate over residues 491–502; it reads GSESAATNSDFS. 3 stretches are compositionally biased toward low complexity: residues 563–577, 607–618, and 632–643; these read PMST…APAP, LSSNASSTASSP, and PSTTTLPFPSPT. The Ubiquitin-binding (UBM) signature appears at 669 to 686; it reads VDAEVFKELPVELQTELI.

It belongs to the DNA polymerase type-Y family. Requires Mg(2+) as cofactor. Mn(2+) is required as a cofactor.

Its subcellular location is the nucleus. It carries out the reaction DNA(n) + a 2'-deoxyribonucleoside 5'-triphosphate = DNA(n+1) + diphosphate. Functionally, error-prone DNA polymerase specifically involved in DNA repair. Plays an important role in translesion synthesis, where the normal high-fidelity DNA polymerases cannot proceed and DNA synthesis stalls. Favors Hoogsteen base-pairing in the active site. Inserts the correct base with higher fidelity opposite an adenosine template. Exhibits low fidelity and efficiency opposite a thymidine template, where it will preferentially insert guanosine. Forms a Schiff base with 5'-deoxyribose phosphate at abasic sites, but may not have lyase activity. The polypeptide is DNA polymerase iota (Drosophila melanogaster (Fruit fly)).